A 181-amino-acid chain; its full sequence is Protein Syd (181 aa).

This sequence belongs to the Syd family.

It is found in the cell inner membrane. In terms of biological role, interacts with the SecY protein in vivo. May bind preferentially to an uncomplexed state of SecY, thus functioning either as a chelating agent for excess SecY in the cell or as a regulatory factor that negatively controls the translocase function. The chain is Protein Syd from Alteromonas mediterranea (strain DSM 17117 / CIP 110805 / LMG 28347 / Deep ecotype).